A 319-amino-acid chain; its full sequence is MARKKITLVGAGNIGGTLAHLALIKQLGDVVLFDIAQGMPNGKALDLLQTCPIEGVDFKVRGTNDYKDLENSDVVIVTAGVPRKPGMSRDDLLGINIKVMQTVGEGIKHNCPNAFVICITNPLDIMVNMLQKFSGVPDNKIVGMAGVLDSARFRTFLADELNVSVQQVQAYVMGGHGDTMVPLTKMSNVAGVSLEQLVKEGKLKQERLDAIVSRTRSGGGEIVALLKTGSAYYAPAAAGIQMAESFLKDKKMILPCAAKVKAGMYGLDEDLFVGVPTEISANGVRPIEVEISDKEREQLQVSINAVKDLNKAAAEILAK.

NAD(+) contacts are provided by residues 10-15 and D34; that span reads GAGNIG. Substrate is bound by residues R83 and R89. Residues N96 and 119 to 121 each bind NAD(+); that span reads ITN. Residues N121 and R152 each coordinate substrate. Residue H176 is the Proton acceptor of the active site.

This sequence belongs to the LDH/MDH superfamily. MDH type 3 family.

It carries out the reaction (S)-malate + NAD(+) = oxaloacetate + NADH + H(+). In terms of biological role, catalyzes the reversible oxidation of malate to oxaloacetate. The sequence is that of Malate dehydrogenase from Francisella tularensis subsp. holarctica (strain FTNF002-00 / FTA).